A 249-amino-acid polypeptide reads, in one-letter code: tRNA pseudouridine synthase A (249 aa).

Asp-53 serves as the catalytic Nucleophile. A substrate-binding site is contributed by Tyr-111.

Belongs to the tRNA pseudouridine synthase TruA family. Homodimer.

It carries out the reaction uridine(38/39/40) in tRNA = pseudouridine(38/39/40) in tRNA. Formation of pseudouridine at positions 38, 39 and 40 in the anticodon stem and loop of transfer RNAs. The polypeptide is tRNA pseudouridine synthase A (Streptococcus equi subsp. zooepidemicus (strain MGCS10565)).